A 114-amino-acid chain; its full sequence is SOSS complex subunit C homolog (114 aa).

Over residues 1-10 (MAFQQHGNQE) the composition is skewed to polar residues. A disordered region spans residues 1 to 61 (MAFQQHGNQE…AGNTSASRIH (61 aa)).

Belongs to the SOSS-C family.

This is SOSS complex subunit C homolog from Nematostella vectensis (Starlet sea anemone).